A 374-amino-acid chain; its full sequence is Alcohol dehydrogenase 1 (374 aa).

Position 1 is an N-acetylserine (S1). Residues C46, H67, C97, C100, C103, C111, and C174 each coordinate Zn(2+). NAD(+)-binding positions include 199–204 (GLGGVG), D223, K228, 292–294 (VGV), and R369.

Belongs to the zinc-containing alcohol dehydrogenase family. Class-I subfamily. It depends on Zn(2+) as a cofactor.

Its subcellular location is the cytoplasm. It carries out the reaction a primary alcohol + NAD(+) = an aldehyde + NADH + H(+). It catalyses the reaction a secondary alcohol + NAD(+) = a ketone + NADH + H(+). The chain is Alcohol dehydrogenase 1 from Alligator mississippiensis (American alligator).